The primary structure comprises 154 residues: Methylglyoxal synthase (154 aa).

The MGS-like domain maps to Gln-6–Ile-154. Residues His-19, Lys-23, Thr-45–Thr-48, and Ser-65–Gly-66 contribute to the substrate site. The Proton donor/acceptor role is filled by Asp-71. His-98 contacts substrate.

Belongs to the methylglyoxal synthase family.

The enzyme catalyses dihydroxyacetone phosphate = methylglyoxal + phosphate. Its function is as follows. Catalyzes the formation of methylglyoxal from dihydroxyacetone phosphate. In Pseudoalteromonas translucida (strain TAC 125), this protein is Methylglyoxal synthase.